Here is a 285-residue protein sequence, read N- to C-terminus: 4-diphosphocytidyl-2-C-methyl-D-erythritol kinase (285 aa).

Lys9 is an active-site residue. 89-99 (PLGAGLGGGSS) contacts ATP. The active site involves Asp131.

This sequence belongs to the GHMP kinase family. IspE subfamily.

The catalysed reaction is 4-CDP-2-C-methyl-D-erythritol + ATP = 4-CDP-2-C-methyl-D-erythritol 2-phosphate + ADP + H(+). It functions in the pathway isoprenoid biosynthesis; isopentenyl diphosphate biosynthesis via DXP pathway; isopentenyl diphosphate from 1-deoxy-D-xylulose 5-phosphate: step 3/6. Its function is as follows. Catalyzes the phosphorylation of the position 2 hydroxy group of 4-diphosphocytidyl-2C-methyl-D-erythritol. In Thermodesulfovibrio yellowstonii (strain ATCC 51303 / DSM 11347 / YP87), this protein is 4-diphosphocytidyl-2-C-methyl-D-erythritol kinase.